The chain runs to 178 residues: Transcription factor E (178 aa).

One can recognise an HTH TFE/IIEalpha-type domain in the interval 4–88; it reads AEDLFINLAK…YWKPNIDQIN (85 aa).

The protein belongs to the TFE family. In terms of assembly, monomer. Interaction with RNA polymerase subunits RpoF and RpoE is necessary for Tfe stimulatory transcription activity. Able to interact with Tbp and RNA polymerase in the absence of DNA promoter. Interacts both with the preinitiation and elongation complexes.

Transcription factor that plays a role in the activation of archaeal genes transcribed by RNA polymerase. Facilitates transcription initiation by enhancing TATA-box recognition by TATA-box-binding protein (Tbp), and transcription factor B (Tfb) and RNA polymerase recruitment. Not absolutely required for transcription in vitro, but particularly important in cases where Tbp or Tfb function is not optimal. It dynamically alters the nucleic acid-binding properties of RNA polymerases by stabilizing the initiation complex and destabilizing elongation complexes. Seems to translocate with the RNA polymerase following initiation and acts by binding to the non template strand of the transcription bubble in elongation complexes. The protein is Transcription factor E of Saccharolobus islandicus (strain L.S.2.15 / Lassen #1) (Sulfolobus islandicus).